Reading from the N-terminus, the 365-residue chain is Green-sensitive opsin P521 (365 aa).

At 1-51 (MTEAWNVAVFAARRSRDDDDTTRGSVFTYTNTNNTRGPFEGPNYHIAPRWV) the chain is on the extracellular side. N-linked (GlcNAc...) asparagine glycosylation occurs at Asn-33. The helical transmembrane segment at 52 to 76 (YNLVSFFMIIVVIASCFTNGLVLVA) threads the bilayer. Topologically, residues 77–88 (TAKFKKLRHPLN) are cytoplasmic. The helical transmembrane segment at 89–113 (WILVNLAFVDLVETLVASTISVFNQ) threads the bilayer. Over 114-128 (IFGYFILGHPLCVIE) the chain is Extracellular. Residues Cys-125 and Cys-202 are joined by a disulfide bond. Residues 129 to 148 (GYVVSSCGITGLWSLAIISW) traverse the membrane as a helical segment. Topologically, residues 149-167 (ERWFVVCKPFGNIKFDSKL) are cytoplasmic. The helical transmembrane segment at 168 to 191 (AIIGIVFSWVWAWGWSAPPIFGWS) threads the bilayer. At 192 to 217 (RYWPHGLKTSCGPDVFSGSVELGCQS) the chain is on the extracellular side. Residues 218 to 245 (FMLTLMITCCFLPLFIIIVCYLQVWMAI) traverse the membrane as a helical segment. Residues 246-267 (RAVAAQQKESESTQKAEREVSR) lie on the Cytoplasmic side of the membrane. Residues 268–291 (MVVVMIVAFCICWGPYASFVSFAA) form a helical membrane-spanning segment. Over 292-299 (ANPGYAFH) the chain is Extracellular. The helical transmembrane segment at 300–324 (PLAAALPAYFAKSATIYNPVIYVFM) threads the bilayer. Residue Lys-311 is modified to N6-(retinylidene)lysine. Residues 325 to 365 (NRQFRNCIMQLFGKKVDDGSEASTTSRTEVSSVSNSSVAPA) lie on the Cytoplasmic side of the membrane. The segment at 342 to 365 (DGSEASTTSRTEVSSVSNSSVAPA) is disordered. Low complexity predominate over residues 345-365 (EASTTSRTEVSSVSNSSVAPA).

It belongs to the G-protein coupled receptor 1 family. Opsin subfamily. Phosphorylated on some or all of the serine and threonine residues present in the C-terminal region. In this lizard the color pigments are found in the rod-shaped photoreceptor cells which have been derived from ancestral cone-like photoreceptors.

The protein localises to the membrane. Its function is as follows. Visual pigments are the light-absorbing molecules that mediate vision. They consist of an apoprotein, opsin, covalently linked to cis-retinal. This chain is Green-sensitive opsin P521, found in Gekko gecko (Tokay gecko).